A 91-amino-acid chain; its full sequence is Large ribosomal subunit protein eL34 (91 aa).

The interval 48–69 (RGRPVEMRKLPKTKKRPERPMP) is disordered.

It belongs to the eukaryotic ribosomal protein eL34 family.

This is Large ribosomal subunit protein eL34 (rpl34e) from Pyrococcus horikoshii (strain ATCC 700860 / DSM 12428 / JCM 9974 / NBRC 100139 / OT-3).